The primary structure comprises 223 residues: Deoxyribose-phosphate aldolase (223 aa).

Asp-89 serves as the catalytic Proton donor/acceptor. The Schiff-base intermediate with acetaldehyde role is filled by Lys-152. The Proton donor/acceptor role is filled by Lys-181.

The protein belongs to the DeoC/FbaB aldolase family. DeoC type 1 subfamily.

The protein localises to the cytoplasm. The catalysed reaction is 2-deoxy-D-ribose 5-phosphate = D-glyceraldehyde 3-phosphate + acetaldehyde. The protein operates within carbohydrate degradation; 2-deoxy-D-ribose 1-phosphate degradation; D-glyceraldehyde 3-phosphate and acetaldehyde from 2-deoxy-alpha-D-ribose 1-phosphate: step 2/2. Its function is as follows. Catalyzes a reversible aldol reaction between acetaldehyde and D-glyceraldehyde 3-phosphate to generate 2-deoxy-D-ribose 5-phosphate. This chain is Deoxyribose-phosphate aldolase, found in Listeria monocytogenes serotype 4b (strain F2365).